The primary structure comprises 81 residues: Putative defensin-like protein 265 (81 aa).

Positions 1–26 are cleaved as a signal peptide; the sequence is MEKTVSRKVVVLAILLSLSCLCIAKA. 3 cysteine pairs are disulfide-bonded: C48–C66, C54–C71, and C58–C73.

It belongs to the DEFL family.

It localises to the secreted. In Arabidopsis thaliana (Mouse-ear cress), this protein is Putative defensin-like protein 265.